The chain runs to 101 residues: Large ribosomal subunit protein bL21 (101 aa).

Belongs to the bacterial ribosomal protein bL21 family. Part of the 50S ribosomal subunit. Contacts protein L20.

Its function is as follows. This protein binds to 23S rRNA in the presence of protein L20. This is Large ribosomal subunit protein bL21 from Micrococcus luteus (strain ATCC 4698 / DSM 20030 / JCM 1464 / CCM 169 / CCUG 5858 / IAM 1056 / NBRC 3333 / NCIMB 9278 / NCTC 2665 / VKM Ac-2230) (Micrococcus lysodeikticus).